The chain runs to 224 residues: Ras-related protein Rab-32C (224 aa).

Positions 1–22 are disordered; that stretch reads MYSNKNDKDKDKDQNNENNKNN. 35–42 lines the GTP pocket; sequence GKLACGKT. Residues 57–65 carry the Effector region motif; sequence YKPTIGVDF. GTP-binding positions include 83 to 87 and 142 to 145; these read DIAGQ and NKCD. Residues 203–224 are disordered; that stretch reads GFKLSDQSQSTETTPTQSKTCC. The span at 209 to 224 shows a compositional bias: low complexity; that stretch reads QSQSTETTPTQSKTCC. S-geranylgeranyl cysteine attachment occurs at residues Cys-223 and Cys-224.

The protein belongs to the small GTPase superfamily. Rab family.

The sequence is that of Ras-related protein Rab-32C (rab32C) from Dictyostelium discoideum (Social amoeba).